We begin with the raw amino-acid sequence, 99 residues long: A-type ATP synthase subunit F (99 aa).

It belongs to the V-ATPase F subunit family. In terms of assembly, has multiple subunits with at least A(3), B(3), C, D, E, F, H, I and proteolipid K(x).

The protein resides in the cell membrane. Component of the A-type ATP synthase that produces ATP from ADP in the presence of a proton gradient across the membrane. This Methanococcus maripaludis (strain DSM 14266 / JCM 13030 / NBRC 101832 / S2 / LL) protein is A-type ATP synthase subunit F.